The chain runs to 421 residues: Forkhead box protein J1 (421 aa).

Disordered regions lie at residues 1–32 (MAES…LDDS) and 77–110 (ADPA…PPPD). Residues 11–21 (AGPGEEAGPEG) show a composition bias toward gly residues. Residues 90–99 (KPTSSCTSRS) show a composition bias toward polar residues. A DNA-binding region (fork-head) is located at residues 120–210 (VKPPYSYATL…YAERLLSGAF (91 aa)).

Belongs to the FOXJ1 family. Predominantly expressed in tissues containing motile cilia.

It is found in the nucleus. Functionally, transcription factor specifically required for the formation of motile cilia. Acts by activating transcription of genes that mediate assembly of motile cilia, such as CFAP157. Binds the DNA consensus sequences 5'-HWDTGTTTGTTTA-3' or 5'-KTTTGTTGTTKTW-3' (where H is not G, W is A or T, D is not C, and K is G or T). Activates the transcription of a variety of ciliary proteins in the developing brain and lung. This is Forkhead box protein J1 from Mus musculus (Mouse).